Here is a 315-residue protein sequence, read N- to C-terminus: Calumenin (315 aa).

The N-terminal stretch at 1 to 19 (MDLRQFLMCLSLCTAFALS) is a signal peptide. Phosphoserine is present on Ser44. Tyr47 is modified (phosphotyrosine). Thr65 bears the Phosphothreonine mark. 6 EF-hand domains span residues 68–103 (ESKERLGKIVSKIDGDKDGFVTVDELKDWIKFAQKR), 104–139 (WIYEDVERQWKGHDLNEDGLVSWEEYKNATYGYVLD), 151–186 (QMMVRDERRFKMADKDGDLIATKEEFTAFLHPEEYD), 188–223 (MKDIVVQETMEDIDKNADGFIDLEEYIGDMYSHDGN), 229–264 (WVKTEREQFVEFRDKNRDGKMDKEETKDWILPSDYD), and 265–300 (HAEAEARHLVYESDQNKDGKLTKEEIVDKYDLFVGS). Phosphoserine; by FAM20C is present on Ser69. Ca(2+) contacts are provided by Asp81, Asp83, Asp85, Glu92, Asp117, Asn119, Asp121, and Glu128. A glycan (N-linked (GlcNAc...) (complex) asparagine) is linked at Asn131. Residue Asp164 coordinates Ca(2+). Lys165 bears the N6-acetyllysine mark. Asp166, Asp168, Glu175, Asp201, Asn203, Asp205, Glu212, Asp242, Asn244, Asp246, Lys248, and Glu253 together coordinate Ca(2+). A Phosphothreonine modification is found at Thr254. Residues Ser261 and Ser277 each carry the phosphoserine modification. Residues Asp278, Asn280, Asp282, Lys284, and Glu289 each contribute to the Ca(2+) site. The Prevents secretion from ER motif lies at 312–315 (HDEF).

Belongs to the CREC family. As to quaternary structure, interacts with GGCX. As to expression, ubiquitously expressed. Expressed at high levels in heart, placenta and skeletal muscle, at lower levels in lung, kidney and pancreas and at very low levels in brain and liver.

The protein localises to the endoplasmic reticulum membrane. The protein resides in the golgi apparatus. It localises to the secreted. Its subcellular location is the melanosome. It is found in the sarcoplasmic reticulum lumen. In terms of biological role, involved in regulation of vitamin K-dependent carboxylation of multiple N-terminal glutamate residues. Seems to inhibit gamma-carboxylase GGCX. Binds 7 calcium ions with a low affinity. The protein is Calumenin (CALU) of Homo sapiens (Human).